Here is a 307-residue protein sequence, read N- to C-terminus: GMP synthase [glutamine-hydrolyzing] subunit B (307 aa).

The GMPS ATP-PPase domain occupies 1–184 (MWENFIEEKV…LGLPEKIYNR (184 aa)). 27 to 33 (SGGVDSS) contacts ATP.

In terms of assembly, heterodimer composed of a glutamine amidotransferase subunit (A) and a GMP-binding subunit (B).

It carries out the reaction XMP + L-glutamine + ATP + H2O = GMP + L-glutamate + AMP + diphosphate + 2 H(+). It participates in purine metabolism; GMP biosynthesis; GMP from XMP (L-Gln route): step 1/1. Catalyzes the synthesis of GMP from XMP. This chain is GMP synthase [glutamine-hydrolyzing] subunit B, found in Thermococcus kodakarensis (strain ATCC BAA-918 / JCM 12380 / KOD1) (Pyrococcus kodakaraensis (strain KOD1)).